A 424-amino-acid chain; its full sequence is Phosphomethylpyrimidine synthase (424 aa).

Residues M94, Y123, H162, 184–186, 225–228, and E264 each bind substrate; these read SRG and NGMR. H268 contacts Zn(2+). Y291 provides a ligand contact to substrate. Residue H332 participates in Zn(2+) binding. Residues C406, C409, and C413 each contribute to the [4Fe-4S] cluster site.

It belongs to the ThiC family. Requires [4Fe-4S] cluster as cofactor.

The enzyme catalyses 5-amino-1-(5-phospho-beta-D-ribosyl)imidazole + S-adenosyl-L-methionine = 4-amino-2-methyl-5-(phosphooxymethyl)pyrimidine + CO + 5'-deoxyadenosine + formate + L-methionine + 3 H(+). It functions in the pathway cofactor biosynthesis; thiamine diphosphate biosynthesis. Catalyzes the synthesis of the hydroxymethylpyrimidine phosphate (HMP-P) moiety of thiamine from aminoimidazole ribotide (AIR) in a radical S-adenosyl-L-methionine (SAM)-dependent reaction. This Methanosphaerula palustris (strain ATCC BAA-1556 / DSM 19958 / E1-9c) protein is Phosphomethylpyrimidine synthase.